A 199-amino-acid polypeptide reads, in one-letter code: ATP-dependent Clp protease proteolytic subunit (199 aa).

Catalysis depends on Ser97, which acts as the Nucleophile. Residue His122 is part of the active site.

This sequence belongs to the peptidase S14 family. As to quaternary structure, fourteen ClpP subunits assemble into 2 heptameric rings which stack back to back to give a disk-like structure with a central cavity, resembling the structure of eukaryotic proteasomes.

The protein localises to the cytoplasm. It catalyses the reaction Hydrolysis of proteins to small peptides in the presence of ATP and magnesium. alpha-casein is the usual test substrate. In the absence of ATP, only oligopeptides shorter than five residues are hydrolyzed (such as succinyl-Leu-Tyr-|-NHMec, and Leu-Tyr-Leu-|-Tyr-Trp, in which cleavage of the -Tyr-|-Leu- and -Tyr-|-Trp bonds also occurs).. Functionally, cleaves peptides in various proteins in a process that requires ATP hydrolysis. Has a chymotrypsin-like activity. Plays a major role in the degradation of misfolded proteins. The sequence is that of ATP-dependent Clp protease proteolytic subunit from Pelobacter propionicus (strain DSM 2379 / NBRC 103807 / OttBd1).